Here is a 166-residue protein sequence, read N- to C-terminus: UPF0561 protein C2orf68 (166 aa).

The segment at 32–107 (NQIARDDYDK…SELEPSGHQL (76 aa)) is disordered. Basic and acidic residues-rich tracts occupy residues 34-49 (IARDDYDKKVKQAAKE) and 73-85 (RHRDVSAHPRNPD). Low complexity predominate over residues 91–104 (ESSSSGGSELEPSG).

The protein belongs to the UPF0561 family.

In Homo sapiens (Human), this protein is UPF0561 protein C2orf68 (C2orf68).